The sequence spans 222 residues: MAEKQKAVAKQEKVAISKRDPWALKKWYTVYAPSYLGGVALAEVPAAEAQKLLLRTIEVSLYDITKDISHLPIKLRFQIHRVDGLKAATRFKGLELTRDYVRSLVRKGTSKVSAIVDVKTKDGWVMRISILAVTAHRIGTAQKSAIRKRVAEALSRKASDSDVGQFLKEVLEGSLAAELFVAGKKIAPLRKVEVAKIKVLRYPPEEEQTAVREVAAEEVAAS.

Belongs to the eukaryotic ribosomal protein eS1 family.

The sequence is that of Small ribosomal subunit protein eS1 from Pyrobaculum neutrophilum (strain DSM 2338 / JCM 9278 / NBRC 100436 / V24Sta) (Thermoproteus neutrophilus).